The following is an 85-amino-acid chain: Large ribosomal subunit protein bL27 (85 aa).

This sequence belongs to the bacterial ribosomal protein bL27 family.

In Pseudomonas aeruginosa (strain LESB58), this protein is Large ribosomal subunit protein bL27.